We begin with the raw amino-acid sequence, 127 residues long: Aspartate 1-decarboxylase (127 aa).

Residue S25 is the Schiff-base intermediate with substrate; via pyruvic acid of the active site. S25 carries the post-translational modification Pyruvic acid (Ser). A substrate-binding site is contributed by T57. The Proton donor role is filled by Y58. 73–75 provides a ligand contact to substrate; that stretch reads GAA.

Belongs to the PanD family. As to quaternary structure, heterooctamer of four alpha and four beta subunits. Pyruvate serves as cofactor. Is synthesized initially as an inactive proenzyme, which is activated by self-cleavage at a specific serine bond to produce a beta-subunit with a hydroxyl group at its C-terminus and an alpha-subunit with a pyruvoyl group at its N-terminus.

The protein resides in the cytoplasm. It carries out the reaction L-aspartate + H(+) = beta-alanine + CO2. The protein operates within cofactor biosynthesis; (R)-pantothenate biosynthesis; beta-alanine from L-aspartate: step 1/1. In terms of biological role, catalyzes the pyruvoyl-dependent decarboxylation of aspartate to produce beta-alanine. The sequence is that of Aspartate 1-decarboxylase from Listeria monocytogenes serotype 4b (strain F2365).